Reading from the N-terminus, the 411-residue chain is MATADVPLSSINWQKNLFVAWCGCFLTGIAFSLVMPFLPLYVELLGVTDPHSLNMWSGLVFSITFLFSAIASPFWGGLADRKGRKIMLLRSALGMSVVMVLMGLATSIWQFLALRAVLGLLGGFVPNANALIATQVPRNKSGWALGWLSTGAVSGALIGPLIGGLLADSFGLRPVFFITASVLFVCFIMTLFAVREEFVPVQKKDMLHAHQVFTTLKNPRLVLTLFVTTMIIQVATGSIAPILTLYVRDLAGDIQNLAFVSGLIASVPGVAALISAPRLGKLGDRIGPERILVAMLLVSVLLLIPMSMVQNPLQLGILRFLLGAADGALLPAVQTLLIYNASNQVAGRIFSYNQSFRDIGNVTGPLMGAAVSAHWGFRAVFVVTACVVLFNAIYSWITLRRRVDRSSMLDE.

The next 11 helical transmembrane spans lie at 17-37 (LFVA…VMPF), 59-79 (LVFS…GGLA), 92-112 (ALGM…WQFL), 116-136 (AVLG…ATQV), 147-167 (WLST…GLLA), 174-194 (PVFF…LFAV), 222-242 (VLTL…IAPI), 257-277 (LAFV…ISAP), 291-311 (ILVA…MVQN), 320-340 (FLLG…LIYN), and 379-399 (AVFV…WITL).

Belongs to the major facilitator superfamily. DHA1 family. MdtG (TC 2.A.1.2.20) subfamily.

It localises to the cell inner membrane. In Erwinia billingiae (strain Eb661), this protein is Multidrug resistance protein MdtG.